We begin with the raw amino-acid sequence, 437 residues long: CCA-adding enzyme (437 aa).

Serine 47 and arginine 50 together coordinate ATP. CTP is bound by residues serine 47 and arginine 50. The Mg(2+) site is built by glutamate 59, aspartate 61, and aspartate 110. Positions 133, 152, and 161 each coordinate ATP. Histidine 133, lysine 152, and tyrosine 161 together coordinate CTP.

It belongs to the tRNA nucleotidyltransferase/poly(A) polymerase family. Archaeal CCA-adding enzyme subfamily. As to quaternary structure, homodimer. Requires Mg(2+) as cofactor.

It catalyses the reaction a tRNA precursor + 2 CTP + ATP = a tRNA with a 3' CCA end + 3 diphosphate. It carries out the reaction a tRNA with a 3' CCA end + 2 CTP + ATP = a tRNA with a 3' CCACCA end + 3 diphosphate. Its function is as follows. Catalyzes the addition and repair of the essential 3'-terminal CCA sequence in tRNAs without using a nucleic acid template. Adds these three nucleotides in the order of C, C, and A to the tRNA nucleotide-73, using CTP and ATP as substrates and producing inorganic pyrophosphate. tRNA 3'-terminal CCA addition is required both for tRNA processing and repair. Also involved in tRNA surveillance by mediating tandem CCA addition to generate a CCACCA at the 3' terminus of unstable tRNAs. While stable tRNAs receive only 3'-terminal CCA, unstable tRNAs are marked with CCACCA and rapidly degraded. The structural flexibility of RNA controls the choice between CCA versus CCACCA addition: following the first CCA addition cycle, nucleotide-binding to the active site triggers a clockwise screw motion, producing torque on the RNA. This ejects stable RNAs, whereas unstable RNAs are refolded while bound to the enzyme and subjected to a second CCA catalytic cycle. The chain is CCA-adding enzyme from Archaeoglobus fulgidus (strain ATCC 49558 / DSM 4304 / JCM 9628 / NBRC 100126 / VC-16).